A 111-amino-acid polypeptide reads, in one-letter code: Probable 4-amino-4-deoxy-L-arabinose-phosphoundecaprenol flippase subunit ArnE (111 aa).

Over 1–35 the chain is Cytoplasmic; the sequence is MIWLTLVFASLLSVAGQLCQKQATCFAAVNKRRKH. Residues 36 to 56 traverse the membrane as a helical segment; it reads IVLWLGLALACLGLAMVLWLL. The 70-residue stretch at 40–109 folds into the EamA domain; it reads LGLALACLGL…IIGGIVILGS (70 aa). At 57–60 the chain is on the periplasmic side; it reads VLQN. The helical transmembrane segment at 61-81 threads the bilayer; it reads VPVGIAYPMLSLNFVWVTLAA. Residues 82–87 are Cytoplasmic-facing; sequence VKLWHE. Residues 88 to 108 form a helical membrane-spanning segment; that stretch reads PVSLRHWCGLAFIIGGIVILG. Topologically, residues 109–111 are periplasmic; sequence STV.

It belongs to the ArnE family. Heterodimer of ArnE and ArnF.

The protein resides in the cell inner membrane. It functions in the pathway bacterial outer membrane biogenesis; lipopolysaccharide biosynthesis. Translocates 4-amino-4-deoxy-L-arabinose-phosphoundecaprenol (alpha-L-Ara4N-phosphoundecaprenol) from the cytoplasmic to the periplasmic side of the inner membrane. The sequence is that of Probable 4-amino-4-deoxy-L-arabinose-phosphoundecaprenol flippase subunit ArnE from Escherichia coli O81 (strain ED1a).